The chain runs to 335 residues: Phospho-N-acetylmuramoyl-pentapeptide-transferase (335 aa).

The next 10 helical transmembrane spans lie at Leu-3–Ile-23, Gly-53–Phe-73, Ser-78–Leu-98, Phe-118–Ile-138, Val-143–Val-163, Gly-174–Ala-194, Phe-200–Asn-220, Ile-226–Ala-246, Trp-251–Val-271, and Val-314–Tyr-334.

This sequence belongs to the glycosyltransferase 4 family. MraY subfamily. Mg(2+) serves as cofactor.

The protein resides in the cell membrane. It carries out the reaction UDP-N-acetyl-alpha-D-muramoyl-L-alanyl-gamma-D-glutamyl-L-lysyl-D-alanyl-D-alanine + di-trans,octa-cis-undecaprenyl phosphate = Mur2Ac(oyl-L-Ala-gamma-D-Glu-L-Lys-D-Ala-D-Ala)-di-trans,octa-cis-undecaprenyl diphosphate + UMP. It functions in the pathway cell wall biogenesis; peptidoglycan biosynthesis. Functionally, catalyzes the initial step of the lipid cycle reactions in the biosynthesis of the cell wall peptidoglycan: transfers peptidoglycan precursor phospho-MurNAc-pentapeptide from UDP-MurNAc-pentapeptide onto the lipid carrier undecaprenyl phosphate, yielding undecaprenyl-pyrophosphoryl-MurNAc-pentapeptide, known as lipid I. The chain is Phospho-N-acetylmuramoyl-pentapeptide-transferase from Streptococcus equi subsp. zooepidemicus (strain MGCS10565).